The primary structure comprises 729 residues: Pentatricopeptide repeat-containing protein At5g01110 (729 aa).

Positions 26-45 (TSSSPVFEPSSSSSSSSSSA) are disordered. A compositionally biased stretch (low complexity) spans 27–45 (SSSPVFEPSSSSSSSSSSA). PPR repeat units follow at residues 112-147 (TSLS…GVSR), 164-198 (NDSV…GFTV), 199-233 (SIDA…GVGI), 234-268 (NVYT…GVYP), 269-303 (DIVT…GFSP), 304-338 (GVYT…GLSP), 339-373 (DSTT…DVVP), 374-408 (DLVC…GLIP), 409-443 (DNVI…GCAM), 444-478 (DVVT…ALFP), 479-513 (DSYT…RIRL), 514-548 (DVVT…EILP), 549-583 (TPIS…NIKP), 584-618 (TVMI…GFVP), 619-649 (DCIS…MEEE), 656-690 (DVFT…GVNP), and 691-725 (DRST…GFSP).

It belongs to the PPR family. P subfamily.

The chain is Pentatricopeptide repeat-containing protein At5g01110 from Arabidopsis thaliana (Mouse-ear cress).